The sequence spans 935 residues: Pre-mRNA-splicing factor CWC22 homolog (935 aa).

A disordered region spans residues 1–179 (MSRSPSPDSP…PKDLLRTRTG (179 aa)). 2 stretches are compositionally biased toward basic and acidic residues: residues 13–25 (VRDD…REQS) and 49–70 (ESSR…DEKM). The span at 84–148 (QHRRHRESRS…RSPARRRSPV (65 aa)) shows a compositional bias: basic residues. The span at 159-175 (PTEEPEKKKNDPKDLLR) shows a compositional bias: basic and acidic residues. One can recognise an MIF4G domain in the interval 212 to 400 (KKKIHGLVNR…ETAMQIRKDK (189 aa)). Residues 463-489 (ADISSDEEEEVEDDDEESEAEEAPRKT) are disordered. Residues 465–483 (ISSDEEEEVEDDDEESEAE) are compositionally biased toward acidic residues. In terms of domain architecture, MI spans 502 to 633 (AFRREVYLTL…EWKILADVKM (132 aa)). The interval 725-935 (KAAQSSSDSS…VGSDDRRRRH (211 aa)) is disordered. Residues 729 to 763 (SSSDSSSDSSDSSDSSDSSGSSDSSDDSSSSSSSD) are compositionally biased toward low complexity. 2 stretches are compositionally biased toward basic and acidic residues: residues 780 to 891 (KKKE…DRKE) and 897 to 935 (DRRD…RRRH).

It belongs to the CWC22 family.

Its subcellular location is the nucleus. The protein localises to the nucleus speckle. In terms of biological role, required for early embryogenesis and tissue differentiation. Required for pre-mRNA splicing and for exon-junction complex (EJC) assembly. Hinders EIF4A3 from non-specifically binding RNA and escorts it to the splicing machinery to promote EJC assembly on mature mRNAs. Through its role in EJC assembly, required for nonsense-mediated mRNA decay. The polypeptide is Pre-mRNA-splicing factor CWC22 homolog (Caenorhabditis briggsae).